Consider the following 675-residue polypeptide: Putative L-type lectin-domain containing receptor kinase I.11 (675 aa).

Positions 1-22 are cleaved as a signal peptide; that stretch reads MASERLHLILLVFFNHLTFLLS. The Extracellular segment spans residues 23-292; that stretch reads QQEEAGFIYN…PKAKQEQTSP (270 aa). The interval 27–263 is legume-lectin like; sequence AGFIYNGFGQ…YQYILGWSFS (237 aa). Asn60, Asn129, Asn186, Asn209, and Asn230 each carry an N-linked (GlcNAc...) asparagine glycan. Residues 293–313 traverse the membrane as a helical segment; that stretch reads LLIVLLMLLVLIMLAVLGGIY. Residues 314-675 are Cytoplasmic-facing; the sequence is LYRRKKYAEV…THTITYGDGR (362 aa). The Protein kinase domain occupies 348 to 620; sequence FDKDGRLGKG…QVIQYINQNL (273 aa). ATP is bound by residues 354–362 and Lys376; that span reads LGKGGFGEV. The active-site Proton acceptor is the Asp472.

It in the C-terminal section; belongs to the protein kinase superfamily. Ser/Thr protein kinase family. In the N-terminal section; belongs to the leguminous lectin family.

The protein resides in the cell membrane. The catalysed reaction is L-seryl-[protein] + ATP = O-phospho-L-seryl-[protein] + ADP + H(+). It carries out the reaction L-threonyl-[protein] + ATP = O-phospho-L-threonyl-[protein] + ADP + H(+). This chain is Putative L-type lectin-domain containing receptor kinase I.11 (LECRK111), found in Arabidopsis thaliana (Mouse-ear cress).